Consider the following 231-residue polypeptide: ATP phosphoribosyltransferase (231 aa).

This sequence belongs to the ATP phosphoribosyltransferase family. Short subfamily. Heteromultimer composed of HisG and HisZ subunits.

Its subcellular location is the cytoplasm. The enzyme catalyses 1-(5-phospho-beta-D-ribosyl)-ATP + diphosphate = 5-phospho-alpha-D-ribose 1-diphosphate + ATP. Its pathway is amino-acid biosynthesis; L-histidine biosynthesis; L-histidine from 5-phospho-alpha-D-ribose 1-diphosphate: step 1/9. In terms of biological role, catalyzes the condensation of ATP and 5-phosphoribose 1-diphosphate to form N'-(5'-phosphoribosyl)-ATP (PR-ATP). Has a crucial role in the pathway because the rate of histidine biosynthesis seems to be controlled primarily by regulation of HisG enzymatic activity. This Brucella melitensis biotype 2 (strain ATCC 23457) protein is ATP phosphoribosyltransferase.